The following is a 526-amino-acid chain: Thymocyte selection-associated high mobility group box protein TOX (526 aa).

2 disordered regions span residues 138–178 (MPDI…PHGQ) and 192–264 (GLNM…PQKP). Residues 192 to 203 (GLNMGGSNVPHN) are compositionally biased toward polar residues. Over residues 209–220 (GSKSATPSPSSS) the composition is skewed to low complexity. The span at 228 to 245 (DTSKINGGEKRPASDMGK) shows a compositional bias: basic and acidic residues. The short motif at 237 to 256 (KRPASDMGKKPKTPKKKKKK) is the Nuclear localization signal element. The segment covering 246–256 (KPKTPKKKKKK) has biased composition (basic residues). The segment at residues 261 to 329 (PQKPVSAYAL…EYLKQLAAYR (69 aa)) is a DNA-binding region (HMG box).

This sequence belongs to the high motility group (HMG) box superfamily. Interacts with HBO1 complex composed at least of KAT7/HBO1, ING4, MEAF6, and JADE2; this complex is involved in histone acetylation. Interacts with DNMT1, LEO1, PAF1, SAP130 and SIN3A; these interactors regulate chromatin remodeling. Interacts with an array of proteins involved in RNA processing and translation and DNA replication. Expressed in NK cells. Highly expressed in tumor-infiltrating CD8-positive T cells (at protein level).

Its subcellular location is the nucleus. Its function is as follows. Transcriptional regulator with a major role in neural stem cell commitment and corticogenesis as well as in lymphoid cell development and lymphoid tissue organogenesis. Binds to GC-rich DNA sequences in the proximity of transcription start sites and may alter chromatin structure, modifying access of transcription factors to DNA. During cortical development, controls the neural stem cell pool by inhibiting the switch from proliferative to differentiating progenitors. Beyond progenitor cells, promotes neurite outgrowth in newborn neurons migrating to reach the cortical plate. May activate or repress critical genes for neural stem cell fate such as SOX2, EOMES and ROBO2. Plays an essential role in the development of lymphoid tissue-inducer (LTi) cells, a subset necessary for the formation of secondary lymphoid organs: peripheral lymph nodes and Peyer's patches. Acts as a developmental checkpoint and regulates thymocyte positive selection toward T cell lineage commitment. Required for the development of various T cell subsets, including CD4-positive helper T cells, CD8-positive cytotoxic T cells, regulatory T cells and CD1D-dependent natural killer T (NKT) cells. Required for the differentiation of common lymphoid progenitors (CMP) to innate lymphoid cells (ILC). May regulate the NOTCH-mediated gene program, promoting differentiation of the ILC lineage. Required at the progenitor phase of NK cell development in the bone marrow to specify NK cell lineage commitment. Upon chronic antigen stimulation, diverts T cell development by promoting the generation of exhaustive T cells, while suppressing effector and memory T cell programming. May regulate the expression of genes encoding inhibitory receptors such as PDCD1 and induce the exhaustion program, to prevent the overstimulation of T cells and activation-induced cell death. In Homo sapiens (Human), this protein is Thymocyte selection-associated high mobility group box protein TOX.